The primary structure comprises 239 residues: Adapter protein MecA (239 aa).

The segment covering 118–128 has biased composition (basic and acidic residues); that stretch reads EQRTKEKEAQG. The interval 118–137 is disordered; it reads EQRTKEKEAQGSKRQKSSAR.

The protein belongs to the MecA family. In terms of assembly, homodimer.

In terms of biological role, enables the recognition and targeting of unfolded and aggregated proteins to the ClpC protease or to other proteins involved in proteolysis. This Staphylococcus aureus (strain COL) protein is Adapter protein MecA.